The primary structure comprises 449 residues: Keratin, type I cytoskeletal 27 (449 aa).

Positions 1–73 (MSVRFSSASR…VNEHGLLSGN (73 aa)) are head. The interval 74-109 (EKVTMQNLNDRLASYLENVQALEEANADLEQKIKDW) is coil 1A. The IF rod domain occupies 74 to 389 (EKVTMQNLND…LLIGGDEGSC (316 aa)). Positions 110-131 (YEKFGPGSCRGLDHDYSRYFPI) are linker 1. Residues 132–223 (IDDLRTQIIS…KNHEEEMQAL (92 aa)) form a coil 1B region. The linker 12 stretch occupies residues 224–246 (QCAAGGNVNVEMNAAPGVDLTVL). The interval 247-385 (LNNMRAEYEA…ETYCLLIGGD (139 aa)) is coil 2. A tail region spans residues 386 to 449 (EGSCVKSKGQ…NNKNEQRIPS (64 aa)). Positions 425–449 (LSSRVHTLEEKSTKVNNKNEQRIPS) are disordered. Positions 430 to 449 (HTLEEKSTKVNNKNEQRIPS) are enriched in basic and acidic residues.

Belongs to the intermediate filament family. In terms of assembly, heterotetramer of two type I and two type II keratins. Interacts with KRT6A to form filaments.

The protein resides in the cytoplasm. In terms of biological role, essential for the proper assembly of type I and type II keratin protein complexes and formation of keratin intermediate filaments in the inner root sheath (irs). In Rattus norvegicus (Rat), this protein is Keratin, type I cytoskeletal 27.